We begin with the raw amino-acid sequence, 84 residues long: Small ribosomal subunit protein bS18B (84 aa).

This sequence belongs to the bacterial ribosomal protein bS18 family. Part of the 30S ribosomal subunit. Forms a tight heterodimer with protein bS6.

Functionally, binds as a heterodimer with protein bS6 to the central domain of the 16S rRNA, where it helps stabilize the platform of the 30S subunit. The chain is Small ribosomal subunit protein bS18B from Mycolicibacterium smegmatis (strain ATCC 700084 / mc(2)155) (Mycobacterium smegmatis).